The primary structure comprises 416 residues: Formyl-CoA:oxalate CoA-transferase (416 aa).

CoA contacts are provided by residues 17-18 (QS), R38, 72-75 (LNTK), 96-98 (NFH), H104, and 137-140 (KAYE). The active-site Nucleophile is D169. 248-250 (GGQ) is a binding site for substrate. 273-275 (QEQ) lines the CoA pocket.

This sequence belongs to the CoA-transferase III family. Frc subfamily. Homodimer.

It catalyses the reaction formyl-CoA + oxalate = oxalyl-CoA + formate. It functions in the pathway metabolic intermediate degradation; oxalate degradation; CO(2) and formate from oxalate: step 1/2. Its function is as follows. Involved in the catabolism of oxalate and in the adapatation to low pH via the induction of the oxalate-dependent acid tolerance response (ATR). Catalyzes the transfer of the CoA moiety from formyl-CoA to oxalate. This is Formyl-CoA:oxalate CoA-transferase from Shigella boydii serotype 18 (strain CDC 3083-94 / BS512).